The sequence spans 506 residues: Cobyric acid synthase (506 aa).

Residues 251 to 448 (DITIAIVQLP…LHGLFDSDAF (198 aa)) form the GATase cobBQ-type domain. Catalysis depends on Cys-332, which acts as the Nucleophile. Residue His-440 is part of the active site.

It belongs to the CobB/CobQ family. CobQ subfamily.

It participates in cofactor biosynthesis; adenosylcobalamin biosynthesis. Functionally, catalyzes amidations at positions B, D, E, and G on adenosylcobyrinic A,C-diamide. NH(2) groups are provided by glutamine, and one molecule of ATP is hydrogenolyzed for each amidation. This Salmonella arizonae (strain ATCC BAA-731 / CDC346-86 / RSK2980) protein is Cobyric acid synthase.